Reading from the N-terminus, the 1154-residue chain is Serine-aspartate repeat-containing protein E (1154 aa).

Positions 1–52 (MINRDNKKAITKKGMISNRLNKFSIRKYTVGTASILVGTTLIFGLGNQEAKA) are cleaved as a signal peptide. A YSIRK-G/S signaling motif motif is present at residues 23 to 34 (FSIRKYTVGTAS). The segment at 53-606 (AENTSTENAK…GDGTVKPEEK (554 aa)) is ligand binding A region. A disordered region spans residues 54–230 (ENTSTENAKQ…SKEELKNNPE (177 aa)). The segment covering 61 to 75 (AKQDDATTSDNKEVV) has biased composition (basic and acidic residues). Low complexity predominate over residues 77-90 (ETENNSTTENNSTN). The segment covering 92-108 (IKKETNTDSQPEAKKES) has biased composition (basic and acidic residues). Over residues 118-129 (NNVTATTETKPQ) the composition is skewed to polar residues. Over residues 130-145 (NIEKENVKPSTDKTAT) the composition is skewed to basic and acidic residues. Over residues 166 to 178 (TTKPSTSEPSTSE) the composition is skewed to low complexity. Positions 179–212 (IQTKPTTPQESTNIENSQPQPTPSKVDNQVTDAT) are enriched in polar residues. Positions 221–230 (SKEELKNNPE) are enriched in basic and acidic residues. CNA-B domains are found at residues 607-719 (LYKI…YKEP), 720-829 (KYNL…YKTP), and 830-940 (KYSL…EEDT). The tract at residues 904–1129 (VTNTTEDDKD…TGSENNGSNN (226 aa)) is disordered. Composition is skewed to acidic residues over residues 908 to 918 (TEDDKDADGGE) and 935 to 1093 (YFEE…DSDS). Residues 1117 to 1121 (LPETG) carry the LPXTG sorting signal motif. Pentaglycyl murein peptidoglycan amidated threonine is present on Thr1120. Residues 1121–1154 (GSENNGSNNATLFGGLFAALGSLLLFGRRKKQNK) constitute a propeptide, removed by sortase.

It belongs to the serine-aspartate repeat-containing protein (SDr) family. In terms of assembly, interacts with host complement factor H/CFAH (via C-terminus). Interacts with host complement regulator C4BPA.

Its subcellular location is the secreted. The protein localises to the cell wall. Cell surface-associated calcium-binding protein which plays an important role in adhesion and pathogenesis. Contributes to the resistance to killing by innate immune components in blood and thus attenuates bacterial clearance by interacting with host complement factor H/CFAH and modulating its activity. Also inhibits bacterial opsonization and killing by interacting with host complement regulator C4BPA and thus inhibiting classical complement pathway activation. This is Serine-aspartate repeat-containing protein E (sdrE) from Staphylococcus aureus (strain USA300).